The sequence spans 186 residues: Bis(5'-nucleosyl)-tetraphosphatase, symmetrical (186 aa).

Positions 18 to 132 (RYIHTVGVMN…IYVADYIEPN (115 aa)) constitute an HD domain. Histidine 21 is an ADP binding site. Residues histidine 21, histidine 50, and aspartate 51 each coordinate Fe cation. ADP is bound by residues 51–54 (DYAK), histidine 83, 109–110 (HT), aspartate 127, arginine 133, and 170–175 (PVFPDT). Position 127 (aspartate 127) interacts with Fe cation.

It belongs to the Ap4A hydrolase YqeK family. Homodimer.

The catalysed reaction is P(1),P(4)-bis(5'-adenosyl) tetraphosphate + H2O = 2 ADP + 2 H(+). Its function is as follows. Hydrolyzes diadenosine 5',5'''-P1,P4-tetraphosphate (Ap4A) to yield ADP. This is Bis(5'-nucleosyl)-tetraphosphatase, symmetrical (yqeK) from Bacillus subtilis (strain 168).